Reading from the N-terminus, the 506-residue chain is MEEYQVYLELDRSRQQDFLYPLIFREYIYGLAYGHDLNRSILVENVGYDNKSSLLIVKRLITRMYQQNHLIISANDSNKNPFWGYNKNLYSQIISEGFAVVVEIPFSLQLSSSLEEAEIVKSYKNLRSIHSIFPFFEDQFTYLNYVSDVRIPYPIHLEILVQTLRYWVKDAPFFHLLRLFIYEYCNWNSLITPKKYISTFSKRNTRFFLFLYNFYVCEYESILLFLRNKSAHLRLTSFSVLFERIYFYAKIEHLVEVFAKDFSSTLSFFKDPFIHYVRYQGKSILASKNAPLLMNKWKYYLIHLWQYHFYVWSQPGTIHINQLSEHSFHFLGYFSNVRINLSAVRSQMLENSFIIEIGMKKLDTIVPIIPLIRSLAKAKFCNVLGHPISKPVWAYSSDFYIIDRFLRICRNLSHYYNGSSKKKSLYQIKYILRLSCIKTLARKHKSTVRAFLKRLGSEEFLEEFFTEEEEILSLIFPRASSTLQRLYRGRIWYLDIIFINDLVNHE.

This sequence belongs to the intron maturase 2 family. MatK subfamily.

It localises to the plastid. It is found in the chloroplast. Its function is as follows. Usually encoded in the trnK tRNA gene intron. Probably assists in splicing its own and other chloroplast group II introns. The protein is Maturase K of Styphnolobium japonicum (Japanese pagoda tree).